Reading from the N-terminus, the 127-residue chain is Large ribosomal subunit protein bL12 (127 aa).

N6-methyllysine occurs at positions 77 and 88.

Belongs to the bacterial ribosomal protein bL12 family. As to quaternary structure, homodimer. Part of the ribosomal stalk of the 50S ribosomal subunit. Forms a multimeric L10(L12)X complex, where L10 forms an elongated spine to which 2 to 4 L12 dimers bind in a sequential fashion. Binds GTP-bound translation factors.

In terms of biological role, forms part of the ribosomal stalk which helps the ribosome interact with GTP-bound translation factors. Is thus essential for accurate translation. This is Large ribosomal subunit protein bL12 from Nitratidesulfovibrio vulgaris (strain DSM 19637 / Miyazaki F) (Desulfovibrio vulgaris).